The chain runs to 353 residues: Methylthioribose-1-phosphate isomerase (353 aa).

Substrate contacts are provided by residues 48–50 (RGA), Arg-94, and Gln-201. The active-site Proton donor is the Asp-242. Residue 252-253 (NK) participates in substrate binding.

This sequence belongs to the eIF-2B alpha/beta/delta subunits family. MtnA subfamily.

It catalyses the reaction 5-(methylsulfanyl)-alpha-D-ribose 1-phosphate = 5-(methylsulfanyl)-D-ribulose 1-phosphate. It functions in the pathway amino-acid biosynthesis; L-methionine biosynthesis via salvage pathway; L-methionine from S-methyl-5-thio-alpha-D-ribose 1-phosphate: step 1/6. In terms of biological role, catalyzes the interconversion of methylthioribose-1-phosphate (MTR-1-P) into methylthioribulose-1-phosphate (MTRu-1-P). The polypeptide is Methylthioribose-1-phosphate isomerase (Roseiflexus sp. (strain RS-1)).